Reading from the N-terminus, the 257-residue chain is Ditrans,polycis-undecaprenyl-diphosphate synthase ((2E,6E)-farnesyl-diphosphate specific) (257 aa).

The active site involves Asp-24. Asp-24 is a Mg(2+) binding site. Substrate is bound by residues 25 to 28 (GNGR), Trp-29, Arg-37, His-41, and 69 to 71 (SSE). The active-site Proton acceptor is the Asn-72. Substrate contacts are provided by residues Trp-73, Arg-75, Arg-192, and 198–200 (RIS). Residue Glu-211 coordinates Mg(2+).

This sequence belongs to the UPP synthase family. As to quaternary structure, homodimer. Mg(2+) serves as cofactor.

It catalyses the reaction 8 isopentenyl diphosphate + (2E,6E)-farnesyl diphosphate = di-trans,octa-cis-undecaprenyl diphosphate + 8 diphosphate. Its function is as follows. Catalyzes the sequential condensation of isopentenyl diphosphate (IPP) with (2E,6E)-farnesyl diphosphate (E,E-FPP) to yield (2Z,6Z,10Z,14Z,18Z,22Z,26Z,30Z,34E,38E)-undecaprenyl diphosphate (di-trans,octa-cis-UPP). UPP is the precursor of glycosyl carrier lipid in the biosynthesis of bacterial cell wall polysaccharide components such as peptidoglycan and lipopolysaccharide. This chain is Ditrans,polycis-undecaprenyl-diphosphate synthase ((2E,6E)-farnesyl-diphosphate specific), found in Aliivibrio fischeri (strain ATCC 700601 / ES114) (Vibrio fischeri).